A 62-amino-acid chain; its full sequence is Alpha-elapitoxin-Pc1 (62 aa).

4 disulfide bridges follow: Cys-3/Cys-24, Cys-17/Cys-41, Cys-43/Cys-54, and Cys-55/Cys-60.

The protein belongs to the three-finger toxin family. Short-chain subfamily. Type I alpha-neurotoxin sub-subfamily. As to expression, expressed by the venom gland.

The protein localises to the secreted. Bird-specific neurotoxin (tested on chicken) that acts as pseudo-irreversible antagonists at the nicotinic acetylcholine receptor (nAChR) of the skeletal neuromuscular junction. Has no significant effect on the electrically-induced twitches of the rat isolated phrenic nerve-diaphragm preparation. This Pseudechis colletti (Collett's snake) protein is Alpha-elapitoxin-Pc1.